We begin with the raw amino-acid sequence, 481 residues long: MKRGTLPKDVSGIKIHMIGIKGTGMSALAELLCARGARVSGSDVADVFYTDRILARLGVPVRTPFSCQNLADAPDVVIHSAAYVPEENDELAEAYRRGIPTLTYPEALGDISCARFSCGIAGVHGKTTTTAMIAQMVKELRLDASVLVGSAVSGNNDSCVVLNGDTFFIAETCEYRRHFLHFHPQKIVLTSVEHDHQDYYSSYEDILAAYFHYIDRLPQFGELFYCVDDQGVREVVQLAFFSRPDLVYVPYGERAWGDYGVSIHGVQDRKISFSLRGFAGEFYVALPGEHSVLNATGALALALSLVKKQYGEVTVEHLTALRKVLALFQGCRRRSEVLGEVRGILFMDDYGHHPTAIKKTLRGLKTFFPERRIVVDFMSHTYSRTAALLTEFAESFQDADVVILHEIYASAREVYQGEVNGEHLFELTKRKHRRVYYYEAVMQAVPFLQAELKEGDLFVTLGAGDNCKLGEVLFNYFKEEV.

122 to 128 (GVHGKTT) provides a ligand contact to ATP.

The protein belongs to the MurCDEF family.

The protein localises to the cytoplasm. It catalyses the reaction UDP-N-acetyl-alpha-D-muramate + L-alanine + ATP = UDP-N-acetyl-alpha-D-muramoyl-L-alanine + ADP + phosphate + H(+). It participates in cell wall biogenesis; peptidoglycan biosynthesis. Its function is as follows. Cell wall formation. The sequence is that of UDP-N-acetylmuramate--L-alanine ligase from Treponema pallidum (strain Nichols).